The sequence spans 695 residues: Centrosomal protein kizuna (695 aa).

Residues 1-12 show a composition bias toward gly residues; that stretch reads MPRGRGGGGGGL. The tract at residues 1–24 is disordered; the sequence is MPRGRGGGGGGLRQASATSAPLAS. Residues 15–24 show a composition bias toward low complexity; sequence ASATSAPLAS. Coiled-coil stretches lie at residues 29–57 and 102–132; these read ERVG…EYNK and VEHL…LSKD. Disordered stretches follow at residues 261–313, 351–391, 444–465, and 633–695; these read EIGS…SDRE, HSAW…SDLT, QSFP…EKVP, and SEAS…FYDT. Composition is skewed to polar residues over residues 263–274 and 282–297; these read GSSTQHSKSNLS and LHSS…NSIT. Composition is skewed to basic and acidic residues over residues 299–313 and 360–377; these read LKCD…SDRE and DLDH…KHEE. Positions 382-391 are enriched in low complexity; that stretch reads GSSCSSSDLT. Threonine 391 bears the Phosphothreonine; by PLK1 mark. Basic and acidic residues predominate over residues 448–465; sequence DSKREPSPDSPRQPEKVP. Over residues 633 to 645 the composition is skewed to low complexity; that stretch reads SEASFSSSEGSPL. 3 positions are modified to phosphoserine: serine 667, serine 670, and serine 672. Positions 676–686 are enriched in basic and acidic residues; it reads AALRPRDHDMP.

This sequence belongs to the kizuna family. Interacts with AKAP9, CEP72, ODF2, PCNT and TUBGCP2. Phosphorylation at Thr-391 by PLK1 is not needed for centrosomal localization or pericentriolar material expansion but is indispensable for spindle-pole stabilization.

Its subcellular location is the cytoplasm. It is found in the cytoskeleton. The protein localises to the microtubule organizing center. The protein resides in the centrosome. It localises to the cilium basal body. Centrosomal protein required for establishing a robust mitotic centrosome architecture that can endure the forces that converge on the centrosomes during spindle formation. Required for stabilizing the expanded pericentriolar material around the centriole. In Mus musculus (Mouse), this protein is Centrosomal protein kizuna (Kiz).